A 368-amino-acid polypeptide reads, in one-letter code: NAD(P)H-quinone oxidoreductase subunit 1, chloroplastic (368 aa).

The next 9 membrane-spanning stretches (helical) occupy residues 11 to 31, 33 to 53, 98 to 118, 131 to 151, 177 to 197, 205 to 225, 255 to 275, 305 to 325, and 348 to 368; these read RVIN…LIWI, IYIL…VWLE, WLFS…YLVI, IGVF…LMAG, LALC…VDIV, FWGW…ISSL, FGLF…FVTI, VLGI…FLFI, and FLLP…LLLL.

The protein belongs to the complex I subunit 1 family. NDH is composed of at least 16 different subunits, 5 of which are encoded in the nucleus.

The protein resides in the plastid. The protein localises to the chloroplast thylakoid membrane. The catalysed reaction is a plastoquinone + NADH + (n+1) H(+)(in) = a plastoquinol + NAD(+) + n H(+)(out). The enzyme catalyses a plastoquinone + NADPH + (n+1) H(+)(in) = a plastoquinol + NADP(+) + n H(+)(out). NDH shuttles electrons from NAD(P)H:plastoquinone, via FMN and iron-sulfur (Fe-S) centers, to quinones in the photosynthetic chain and possibly in a chloroplast respiratory chain. The immediate electron acceptor for the enzyme in this species is believed to be plastoquinone. Couples the redox reaction to proton translocation, and thus conserves the redox energy in a proton gradient. The sequence is that of NAD(P)H-quinone oxidoreductase subunit 1, chloroplastic from Cycas taitungensis (Prince sago).